Here is a 359-residue protein sequence, read N- to C-terminus: Nicotinate N-methyltransferase 1 (359 aa).

Aspartate 226 serves as a coordination point for S-adenosyl-L-methionine.

This sequence belongs to the class I-like SAM-binding methyltransferase superfamily. Cation-independent O-methyltransferase family. Highly expressed in anthers, pistils, developing siliques, and developing seeds.

The protein resides in the cytoplasm. It is found in the cytosol. It catalyses the reaction nicotinate + S-adenosyl-L-methionine = N-methylnicotinate + S-adenosyl-L-homocysteine. Functionally, involved in nicotinate detoxification in planta. Catalyzes the conversion of nicotinate to N-methylnicotinate, which is a detoxified form of endogenous nicotinate in planta. This chain is Nicotinate N-methyltransferase 1, found in Arabidopsis thaliana (Mouse-ear cress).